The sequence spans 397 residues: Tyrosine--tRNA ligase (397 aa).

A 'HIGH' region motif is present at residues 39-48 (PTAPDLHLGH). The 'KMSKS' region signature appears at 223 to 227 (KMSKS). Lys-226 contributes to the ATP binding site. The region spanning 334–395 (YPIANLVHDL…GKRKFAKIRL (62 aa)) is the S4 RNA-binding domain.

Belongs to the class-I aminoacyl-tRNA synthetase family. TyrS type 2 subfamily. In terms of assembly, homodimer.

It localises to the cytoplasm. The enzyme catalyses tRNA(Tyr) + L-tyrosine + ATP = L-tyrosyl-tRNA(Tyr) + AMP + diphosphate + H(+). In terms of biological role, catalyzes the attachment of tyrosine to tRNA(Tyr) in a two-step reaction: tyrosine is first activated by ATP to form Tyr-AMP and then transferred to the acceptor end of tRNA(Tyr). The polypeptide is Tyrosine--tRNA ligase (Methylococcus capsulatus (strain ATCC 33009 / NCIMB 11132 / Bath)).